The sequence spans 491 residues: Anthranilate synthase component 1 (491 aa).

Residues S49 and 271–273 (PYL) each bind L-tryptophan. 306 to 307 (GT) is a binding site for chorismate. E333 contributes to the Mg(2+) binding site. Chorismate is bound by residues Y421, R441, 455-457 (GAG), and G457. Position 470 (E470) interacts with Mg(2+).

It belongs to the anthranilate synthase component I family. As to quaternary structure, heterotetramer consisting of two non-identical subunits: a beta subunit (TrpG) and a large alpha subunit (TrpE). It depends on Mg(2+) as a cofactor.

It catalyses the reaction chorismate + L-glutamine = anthranilate + pyruvate + L-glutamate + H(+). Its pathway is amino-acid biosynthesis; L-tryptophan biosynthesis; L-tryptophan from chorismate: step 1/5. With respect to regulation, feedback inhibited by tryptophan. Part of a heterotetrameric complex that catalyzes the two-step biosynthesis of anthranilate, an intermediate in the biosynthesis of L-tryptophan. In the first step, the glutamine-binding beta subunit (TrpG) of anthranilate synthase (AS) provides the glutamine amidotransferase activity which generates ammonia as a substrate that, along with chorismate, is used in the second step, catalyzed by the large alpha subunit of AS (TrpE) to produce anthranilate. In the absence of TrpG, TrpE can synthesize anthranilate directly from chorismate and high concentrations of ammonia. This chain is Anthranilate synthase component 1 (trpE), found in Neisseria meningitidis serogroup B (strain ATCC BAA-335 / MC58).